The sequence spans 294 residues: Probable 2-(5''-triphosphoribosyl)-3'-dephosphocoenzyme-A synthase (294 aa).

It belongs to the CitG/MdcB family.

It carries out the reaction 3'-dephospho-CoA + ATP = 2'-(5''-triphospho-alpha-D-ribosyl)-3'-dephospho-CoA + adenine. This Streptococcus pyogenes serotype M3 (strain ATCC BAA-595 / MGAS315) protein is Probable 2-(5''-triphosphoribosyl)-3'-dephosphocoenzyme-A synthase.